Reading from the N-terminus, the 60-residue chain is Large ribosomal subunit protein bL32 (60 aa).

Residues 1 to 60 form a disordered region; that stretch reads MAVQQVKKSRSKRDMRRSHDSLTNPTLSTDKSTGELHLRHHVSPNGFYKGRKVVDTKSED. Basic residues predominate over residues 7 to 16; that stretch reads KKSRSKRDMR. The span at 22–31 shows a compositional bias: polar residues; it reads LTNPTLSTDK.

Belongs to the bacterial ribosomal protein bL32 family.

In Francisella tularensis subsp. holarctica (strain LVS), this protein is Large ribosomal subunit protein bL32.